A 678-amino-acid chain; its full sequence is uncharacterized protein (678 aa).

Disordered stretches follow at residues 123–156 (TPLS…TDSV) and 381–417 (TETT…TEHS).

It is found in the cytoplasm. This is an uncharacterized protein from Schizosaccharomyces pombe (strain 972 / ATCC 24843) (Fission yeast).